The primary structure comprises 380 residues: MRIVADENIPLLDAFFAHFGEIHRLPGRAMDRAAVADADILLVRSVTAVTRELLEGSPVRFVGTCTIGTDHLDLDWFQQAGIQWASAPGCNARGVVDYVLGSLLTLAEIEGVDLAQRTYGVVGAGQVGARLISVLKALGWNVLVCDPPRQAAEGGDFVSLDEILQRCDVISLHTPLSKTGASPTWHLLDDARLRQLRQGAWLINASRGAVVDNAALHDVLLEREDLQAVLDVWEGEPQVNVALADLCILGTPHIAGYSLDGRQRGTAQIYQALCGFLDQPATIELDDLLPKPWLAQVSLDAACDPVWALNMLCRGVYDPRRDDADFRRSLTGDTASQRLAFDALRKQYPPRREIEGLKVRLEGESEALAQLVRALGAVLV.

Substrate is bound by residues S45 and T66. NAD(+) is bound by residues 126 to 127, D146, T174, 205 to 207, and D231; these read QV and ASR. R207 is an active-site residue. The active site involves E236. H253 functions as the Proton donor in the catalytic mechanism. G256 contacts NAD(+). Residue Y257 participates in substrate binding.

It belongs to the D-isomer specific 2-hydroxyacid dehydrogenase family. PdxB subfamily. Homodimer.

It localises to the cytoplasm. It catalyses the reaction 4-phospho-D-erythronate + NAD(+) = (R)-3-hydroxy-2-oxo-4-phosphooxybutanoate + NADH + H(+). The protein operates within cofactor biosynthesis; pyridoxine 5'-phosphate biosynthesis; pyridoxine 5'-phosphate from D-erythrose 4-phosphate: step 2/5. Its function is as follows. Catalyzes the oxidation of erythronate-4-phosphate to 3-hydroxy-2-oxo-4-phosphonooxybutanoate. The polypeptide is Erythronate-4-phosphate dehydrogenase (Pseudomonas syringae pv. syringae (strain B728a)).